A 484-amino-acid polypeptide reads, in one-letter code: MNREQIHILFFPFMAHGHMIPLLDMAKLFARRGAKSTLLTTPINAKILEKPIEAFKVQNPDLEIGIKILNFPCVELGLPEGCENRDFINSYQKSDSFDLFLKFLFSTKYMKQQLESFIETTKPSALVADMFFPWATESAEKIGVPRLVFHGTSSFALCCSYNMRIHKPHKKVASSSTPFVIPGLPGDIVITEDQANVTNEETPFGKFWKEVRESETSSFGVLVNSFYELESSYADFYRSFVAKKAWHIGPLSLSNRGIAEKAGRGKKANIDEQECLKWLDSKTPGSVVYLSFGSGTGLPNEQLLEIAFGLEGSGQNFIWVVSKNENQVGTGENEDWLPKGFEERNKGKGLIIRGWAPQVLILDHKAIGGFVTHCGWNSTLEGIAAGLPMVTWPMGAEQFYNEKLLTKVLRIGVNVGATELVKKGKLISRAQVEKAVREVIGGEKAEERRLRAKELGEMAKAAVEEGGSSYNDVNKFMEELNGRK.

The active-site Proton acceptor is the histidine 18. An anthocyanidin-binding residues include histidine 18 and asparagine 89. Catalysis depends on aspartate 129, which acts as the Charge relay. 7 residues coordinate UDP-alpha-D-glucose: alanine 356, glutamine 358, histidine 373, tryptophan 376, asparagine 377, serine 378, and glutamate 381. Residue alanine 396 participates in an anthocyanidin binding. Residues glutamate 397 and glutamine 398 each contribute to the UDP-alpha-D-glucose site.

Belongs to the UDP-glycosyltransferase family. As to expression, specifically expressed in roots.

The enzyme catalyses a flavonol + UDP-alpha-D-glucose = a flavonol 3-O-beta-D-glucoside + UDP + H(+). Functionally, possesses quercetin 3-O-glucosyltransferase and low 7-O-glucosyltransferase activities in vitro. Also active in vitro on benzoates and benzoate derivatives. Can detoxify the explosive 2,4,6-trinitrotoluene in plant by forming O- or C-glucose conjugates. In Arabidopsis thaliana (Mouse-ear cress), this protein is UDP-glycosyltransferase 73B4 (UGT73B4).